Reading from the N-terminus, the 475-residue chain is Adenylyl cyclase-associated protein 1 (475 aa).

N-acetylalanine is present on Ala-2. Tyr-31 is modified (phosphotyrosine). Ser-34 is subject to Phosphoserine. Lys-81 carries the post-translational modification N6-acetyllysine. 2 disordered regions span residues Glu-216 to Ser-255 and Met-278 to Glu-318. A compositionally biased stretch (low complexity) spans Ser-218–Ser-228. Residues Gly-229–Val-242 show a composition bias toward pro residues. The segment covering Ser-243–Ser-255 has biased composition (low complexity). Lys-287 is modified (N6-methyllysine). Ser-290, Ser-295, and Ser-301 each carry phosphoserine. Residues Phe-300–Lys-312 show a composition bias toward pro residues. A Phosphothreonine modification is found at Thr-307. Ser-308 and Ser-310 each carry phosphoserine. Residues Pro-313–Val-453 enclose the C-CAP/cofactor C-like domain. Lys-348 is covalently cross-linked (Glycyl lysine isopeptide (Lys-Gly) (interchain with G-Cter in SUMO1)).

Belongs to the CAP family. In terms of assembly, homodimer. Binds actin monomers.

The protein localises to the cell membrane. In terms of biological role, directly regulates filament dynamics and has been implicated in a number of complex developmental and morphological processes, including mRNA localization and the establishment of cell polarity. In Macaca fascicularis (Crab-eating macaque), this protein is Adenylyl cyclase-associated protein 1 (CAP1).